The sequence spans 230 residues: NAD(P)H-hydrate epimerase (230 aa).

Residues 11–218 (AIDVDQELFT…ALQRKYGLNL (208 aa)) form the YjeF N-terminal domain. 61-65 (NNGGD) is a binding site for (6S)-NADPHX. Positions 62 and 126 each coordinate K(+). (6S)-NADPHX-binding positions include 130-136 (GFSFKPP) and aspartate 159. Serine 162 is a binding site for K(+).

It belongs to the NnrE/AIBP family. It depends on K(+) as a cofactor.

It catalyses the reaction (6R)-NADHX = (6S)-NADHX. The catalysed reaction is (6R)-NADPHX = (6S)-NADPHX. Functionally, catalyzes the epimerization of the S- and R-forms of NAD(P)HX, a damaged form of NAD(P)H that is a result of enzymatic or heat-dependent hydration. This is a prerequisite for the S-specific NAD(P)H-hydrate dehydratase to allow the repair of both epimers of NAD(P)HX. The chain is NAD(P)H-hydrate epimerase from Drosophila yakuba (Fruit fly).